A 239-amino-acid polypeptide reads, in one-letter code: Methylthioribulose-1-phosphate dehydratase (239 aa).

Position 94 (C94) interacts with substrate. 2 residues coordinate Zn(2+): H112 and H114. Residue E136 is the Proton donor/acceptor of the active site. A Zn(2+)-binding site is contributed by H192.

This sequence belongs to the aldolase class II family. MtnB subfamily. Zn(2+) serves as cofactor.

It localises to the cytoplasm. The enzyme catalyses 5-(methylsulfanyl)-D-ribulose 1-phosphate = 5-methylsulfanyl-2,3-dioxopentyl phosphate + H2O. The protein operates within amino-acid biosynthesis; L-methionine biosynthesis via salvage pathway; L-methionine from S-methyl-5-thio-alpha-D-ribose 1-phosphate: step 2/6. Functionally, catalyzes the dehydration of methylthioribulose-1-phosphate (MTRu-1-P) into 2,3-diketo-5-methylthiopentyl-1-phosphate (DK-MTP-1-P). Functions in the methionine salvage pathway. May play a role in apoptosis. The polypeptide is Methylthioribulose-1-phosphate dehydratase (Xenopus tropicalis (Western clawed frog)).